The chain runs to 423 residues: MDRAIEIDFRTISVVGLGYIGLPTATVLASRQRELIGVDINQHAVDTINQARIHIVEPDLDMLVRAAVSQGYLRATTEPEPADAFLIAVPTPFLEDKQPDLTYIEAAAKAIAPVLKRGDLVVLESTSPVGATEQLSAWLSEQRSDLSFPHQLGEESDIRVAHCPERVLPGHVLRELVENDRIIGGMTPRCSQAAQRLYELFVRGRCIVTDARTAEMCKLTENAFRDVNIAFANELSMICDEIGVNVWELISVANRHPRVNILQPGPGVGGHCIAVDPWFIVDAAPESARLIRTAREVNDAKPHYVLDRVKQAARRFKEPVIACFGLSFKANIDDLRESPAIEIVRTMVQQQLGTVLVVEPHIKVLPASLEGVELLNAEPALSRADIVVLLVDHQKFRKLDTDRLQSRVVIDTRGMWSAKRLAA.

11-28 (TISVVGLGYIGLPTATVL) contributes to the NAD(+) binding site. K218 serves as the catalytic Proton donor/acceptor. Residue C272 is the Nucleophile of the active site.

Belongs to the UDP-glucose/GDP-mannose dehydrogenase family.

Probably involved in synthesis of sugar components of EPS I, by converting NDP-N-acetyl-D-galactosamine into NDP-N-acetyl-D-galactosaminuronic acid. This chain is NDP-N-acetyl-D-galactosaminuronic acid dehydrogenase (epsD), found in Ralstonia solanacearum (Pseudomonas solanacearum).